An 81-amino-acid polypeptide reads, in one-letter code: Short neurotoxin 2 (81 aa).

A signal peptide spans 1–21 (MKTLLLTLVVVTIVCLDLGYT). 4 cysteine pairs are disulfide-bonded: cysteine 24-cysteine 43, cysteine 38-cysteine 60, cysteine 62-cysteine 73, and cysteine 74-cysteine 79.

The protein belongs to the three-finger toxin family. Short-chain subfamily. Type I alpha-neurotoxin sub-subfamily. As to expression, expressed by the venom gland.

It localises to the secreted. Functionally, binds to muscle nicotinic acetylcholine receptor (nAChR) and inhibit acetylcholine from binding to the receptor, thereby impairing neuromuscular transmission. The protein is Short neurotoxin 2 of Tropidechis carinatus (Australian rough-scaled snake).